Consider the following 86-residue polypeptide: Small ribosomal subunit protein uS17 (86 aa).

This sequence belongs to the universal ribosomal protein uS17 family. In terms of assembly, part of the 30S ribosomal subunit.

In terms of biological role, one of the primary rRNA binding proteins, it binds specifically to the 5'-end of 16S ribosomal RNA. This Bifidobacterium longum (strain DJO10A) protein is Small ribosomal subunit protein uS17.